A 379-amino-acid chain; its full sequence is Heterogeneous nuclear ribonucleoprotein A3 (379 aa).

Residue Met1 is modified to N-acetylmethionine. Over residues 1–10 (MEVKPPPGRP) the composition is skewed to pro residues. Positions 1-34 (MEVKPPPGRPQPDSGRRRRRRGEEGHDPKEPEQL) are disordered. Lys4 participates in a covalent cross-link: Glycyl lysine isopeptide (Lys-Gly) (interchain with G-Cter in SUMO2). Ser14 bears the Phosphoserine mark. Residues 21–34 (RGEEGHDPKEPEQL) are compositionally biased toward basic and acidic residues. Positions 35–118 (RKLFIGGLSF…RAVSREDSVK (84 aa)) constitute an RRM 1 domain. Residue Lys36 forms a Glycyl lysine isopeptide (Lys-Gly) (interchain with G-Cter in SUMO2) linkage. Ser43 is modified (phosphoserine). The residue at position 52 (Arg52) is a Dimethylated arginine; alternate. The residue at position 52 (Arg52) is an Omega-N-methylarginine; alternate. Position 76 is an omega-N-methylarginine (Arg76). Phosphoserine is present on residues Ser112 and Ser116. Lys118 participates in a covalent cross-link: Glycyl lysine isopeptide (Lys-Gly) (interchain with G-Cter in SUMO2). The residue at position 124 (Thr124) is a Phosphothreonine. Positions 126–205 (KKIFVGGIKE…CEVKKALSKQ (80 aa)) constitute an RRM 2 domain. Lys134 carries the N6-acetyllysine; alternate modification. Lys134 is covalently cross-linked (Glycyl lysine isopeptide (Lys-Gly) (interchain with G-Cter in SUMO2); alternate). Glycyl lysine isopeptide (Lys-Gly) (interchain with G-Cter in SUMO2) cross-links involve residues Lys151 and Lys182. The disordered stretch occupies residues 204-225 (KQEMQSAGSQRGRGGGSGNFMG). Residues Arg214, Arg216, Arg226, Arg239, and Arg246 each carry the omega-N-methylarginine; alternate modification. 5 positions are modified to asymmetric dimethylarginine; alternate: Arg214, Arg216, Arg226, Arg239, and Arg246. Positions 214-225 (RGRGGGSGNFMG) are enriched in gly residues. The residue at position 257 (Arg257) is an Omega-N-methylarginine. Arg286 carries the post-translational modification Asymmetric dimethylarginine. Residues 335–379 (NYSGQQQSNYGPMKGGSFGGRSSGSPYGGGYGSGGGSGGYGSRRF) are disordered. Over residues 347–379 (MKGGSFGGRSSGSPYGGGYGSGGGSGGYGSRRF) the composition is skewed to gly residues. The residue at position 351 (Ser351) is a Phosphoserine. Arg355 is modified (omega-N-methylarginine). Ser359 carries the phosphoserine modification. Phosphotyrosine is present on residues Tyr361 and Tyr365. 2 positions are modified to phosphoserine: Ser367 and Ser371. Residue Tyr374 is modified to Phosphotyrosine. Phosphoserine is present on Ser376.

In terms of assembly, identified in the spliceosome C complex.

The protein resides in the nucleus. In terms of biological role, plays a role in cytoplasmic trafficking of RNA. Binds to the cis-acting response element, A2RE. May be involved in pre-mRNA splicing. This chain is Heterogeneous nuclear ribonucleoprotein A3 (Hnrnpa3), found in Mus musculus (Mouse).